Consider the following 131-residue polypeptide: MAMSDPIADMLTRIRNAQLAEKASVSMPSSKVKVAIAAVLKDEGYVEDFAVRQADGKANLEIALKYYAGRPVIERIERISKPGLRIYKGCDDIPRVMNGLGVAIVSTPKGVMTDRKARASKVGGEVLCIVA.

Belongs to the universal ribosomal protein uS8 family. As to quaternary structure, part of the 30S ribosomal subunit. Contacts proteins S5 and S12.

In terms of biological role, one of the primary rRNA binding proteins, it binds directly to 16S rRNA central domain where it helps coordinate assembly of the platform of the 30S subunit. The polypeptide is Small ribosomal subunit protein uS8 (Dechloromonas aromatica (strain RCB)).